A 394-amino-acid polypeptide reads, in one-letter code: Stabilizer of axonemal microtubules 2 (394 aa).

Mn regions lie at residues 110–122 (STTF…PQEI), 144–158 (DTSH…QLEV), 244–256 (NSTS…PYQA), 278–292 (KSTT…EICR), 312–324 (LSTF…PHEL), and 346–360 (VTMY…KQEI).

This sequence belongs to the FAM154 family.

This Mus musculus (Mouse) protein is Stabilizer of axonemal microtubules 2 (Saxo2).